A 491-amino-acid polypeptide reads, in one-letter code: Glutamyl-tRNA(Gln) amidotransferase subunit A (491 aa).

Ser158 acts as the Charge relay system in catalysis. Ser182 (acyl-ester intermediate) is an active-site residue.

It belongs to the amidase family. GatA subfamily. In terms of assembly, heterotrimer of A, B and C subunits.

The enzyme catalyses L-glutamyl-tRNA(Gln) + L-glutamine + ATP + H2O = L-glutaminyl-tRNA(Gln) + L-glutamate + ADP + phosphate + H(+). Functionally, allows the formation of correctly charged Gln-tRNA(Gln) through the transamidation of misacylated Glu-tRNA(Gln) in organisms which lack glutaminyl-tRNA synthetase. The reaction takes place in the presence of glutamine and ATP through an activated gamma-phospho-Glu-tRNA(Gln). The polypeptide is Glutamyl-tRNA(Gln) amidotransferase subunit A (Bradyrhizobium diazoefficiens (strain JCM 10833 / BCRC 13528 / IAM 13628 / NBRC 14792 / USDA 110)).